A 152-amino-acid chain; its full sequence is Small ribosomal subunit protein uS19 (152 aa).

It belongs to the universal ribosomal protein uS19 family.

The chain is Small ribosomal subunit protein uS19 (RPS15) from Podospora anserina (Pleurage anserina).